The primary structure comprises 134 residues: Putative F-box protein R638 (134 aa).

One can recognise an F-box domain in the interval 5 to 52 (NIMNLLNEDCILHILSFLADKDKIQLSLSCKSNLKFLHKTIYDDIYFY).

This is Putative F-box protein R638 from Acanthamoeba polyphaga mimivirus (APMV).